Here is a 307-residue protein sequence, read N- to C-terminus: MSFPDITPDLKAAMPALRGRLLANESLAPLTWFRVGGPAQVLFTPADADDLAYFLKHLPAELPVYVIGVGSNMIVRDGGVPGVVIRLAPRAFGEVKAEGDIITAGTAARDKRVAEVAASADLAGLEFLFGIPGTIGGALRMNAGANGGETKDILVEATAIDRRGETHRLSNADMKFTYRASGTDAALIFTAVRFRGTPSEPAAIRARMAEVQAHRETAQPIREKTGGSTFKNPPGHSAWKLVDAAGCRGLKVGGAQVSEMHCNFLINTGNATADDIETLGETVRERVKASSGIELQWEIKRIGVKAS.

Residues R34–S199 enclose the FAD-binding PCMH-type domain. R179 is a catalytic residue. S228 functions as the Proton donor in the catalytic mechanism. E298 is a catalytic residue.

This sequence belongs to the MurB family. FAD is required as a cofactor.

Its subcellular location is the cytoplasm. It carries out the reaction UDP-N-acetyl-alpha-D-muramate + NADP(+) = UDP-N-acetyl-3-O-(1-carboxyvinyl)-alpha-D-glucosamine + NADPH + H(+). It functions in the pathway cell wall biogenesis; peptidoglycan biosynthesis. Cell wall formation. The protein is UDP-N-acetylenolpyruvoylglucosamine reductase of Bradyrhizobium sp. (strain ORS 278).